A 222-amino-acid polypeptide reads, in one-letter code: N-(5'-phosphoribosyl)anthranilate isomerase (222 aa).

The protein belongs to the TrpF family.

It carries out the reaction N-(5-phospho-beta-D-ribosyl)anthranilate = 1-(2-carboxyphenylamino)-1-deoxy-D-ribulose 5-phosphate. Its pathway is amino-acid biosynthesis; L-tryptophan biosynthesis; L-tryptophan from chorismate: step 3/5. The protein is N-(5'-phosphoribosyl)anthranilate isomerase of Gloeobacter violaceus (strain ATCC 29082 / PCC 7421).